The following is a 391-amino-acid chain: GATA-binding factor 6-A (391 aa).

Residues 57-111 (GAHSVNSHWSQATSESSSFNNSSPHTSSRYHYPPSPPMHNGSTRDTGYSSSLTVS) are disordered. The segment covering 66–83 (SQATSESSSFNNSSPHTS) has biased composition (low complexity). A compositionally biased stretch (polar residues) spans 96–111 (NGSTRDTGYSSSLTVS). 2 consecutive GATA-type zinc fingers follow at residues 182-206 (CVNC…CNAC) and 236-260 (CANC…CNAC). The tract at residues 274-355 (AMKKEGIQTR…TESTSPNSNT (82 aa)) is disordered. A compositionally biased stretch (basic residues) spans 282-291 (TRKRKPKTLN). A compositionally biased stretch (low complexity) spans 292 to 319 (KSKSSSSNGNSSHQISMTPTSTTSSTNS). Residues 326 to 355 (GSPSQNTTPVVASSLMSTQQTESTSPNSNT) show a composition bias toward polar residues.

In embryos, expressed in the presumptive heart mesoderm. In adults, expressed at high levels in heart, small intestine, and stomach and at lower levels in lung, pancreas and colon.

Its subcellular location is the nucleus. Functionally, transcriptional activator that binds 5'-GATA-3'-containing motifs within gene promoters. Regulates cardiac-specific transcription during embryogenesis and thereby cardiogenesis. The chain is GATA-binding factor 6-A (gata6-a) from Xenopus laevis (African clawed frog).